The following is a 558-amino-acid chain: MTGFAEIIISPASFIYFPLLILVGHALIFILNTLRPKAFPPGPRGLPGLGNLLQVDRIFPFLTYGKWAKDYGSDTPLGVKKGATNVVVLNSSRLVRELFEKRGAVYSDRPWQFMNNTWIFKDDLKAAIFQNSSPWLTSWRRDFNKNFGPAAITRLRPIYEAETARLLVKLLEAPTASGKDLEAILVCWMMSVPCLGVCGRRPDSMGDHGFEIKQFRHCSDEYATLVAPNAGDLFPFLRYLPEFFGMAEWKERARAVREAVLNTGTQFLSAAREQRAALDEGKSIAWESVLAKMLREQREKNDDMFTVTDMGNTAFHIVSAATNTSLAVFSIMLLILAKDPQLQQRVRNEVLEVSGGATPTATDLSSLKYTEAFWNEVHRWRPVAPQGVAHAPSQDDIYNGHRIPKGTAIIMNVWNIHHSEEDYDEPEEFIPERFLQHPLGLRSDHTLDAAHLEASASRVTWDFGAGRRICPGMHSAKHSLLLGLAKVLWAFDILPPEGKEIDLSLETGFVQEIALHPKELNVVLKLRDGRTKQDLMDHYSQTYAAEAEVMGWKDGLYQ.

Residues 11-31 (PASFIYFPLLILVGHALIFIL) form a helical membrane-spanning segment. C470 serves as a coordination point for heme.

Belongs to the cytochrome P450 family. Heme is required as a cofactor.

It is found in the membrane. It participates in secondary metabolite biosynthesis. Functionally, cytochrome P450 monooxygenase; part of the gene cluster that mediates the biosynthesis of gregatin A, a fungal polyketide featuring an alkylated furanone core. The PKS grgA synthesizes C11 and C4 polyketide chains in the presence and absence of the trans-enoyl reductase grgB, respectively. The polyketide transferase grgF is then responsible for the fusion of the two carbon chains to produce the furanone skeleton of gregatin A. Next, the cytochrome P450 monooxygenase grgG performs the oxidative cyclization to furnish the gregatin scaffold and leads to the formation of desmethylgregatin A. In this transformation, grgG initially abstracts a hydrogen atom from C-8 to generate a substrate radical, from which one electron is transferred to the iron-heme center to yield a carbocationic species. Heterocyclization along with double-bond isomerizations provides desmethylgregatin A with the furanone ring. Alternatively, grgG might provide hydroxylation at the C-8 radical, which is followed by dehydration to give the cyclized desmethylgregatin A. Finally, the O-methyltransferase grgD methylates the carboxyl group of desmethylgregatin A to provide gregatin A. In Penicillium sp, this protein is Cytochrome P450 monooxygenase grgG (grgG).